Here is a 380-residue protein sequence, read N- to C-terminus: Cytochrome b (380 aa).

4 consecutive transmembrane segments (helical) span residues 34–54 (FGSL…LLAM), 78–99 (WLIR…YLHI), 114–134 (WNTG…GYVL), and 179–199 (FFAL…IHLT). His-84 and His-98 together coordinate heme b. 2 residues coordinate heme b: His-183 and His-197. Residue His-202 coordinates a ubiquinone. Helical transmembrane passes span 227–247 (LKDI…ALFS), 289–309 (LGGV…PFLH), 321–341 (LSQL…WVGS), and 348–368 (FIII…ILFP).

The protein belongs to the cytochrome b family. In terms of assembly, the cytochrome bc1 complex contains 11 subunits: 3 respiratory subunits (MT-CYB, CYC1 and UQCRFS1), 2 core proteins (UQCRC1 and UQCRC2) and 6 low-molecular weight proteins (UQCRH/QCR6, UQCRB/QCR7, UQCRQ/QCR8, UQCR10/QCR9, UQCR11/QCR10 and a cleavage product of UQCRFS1). This cytochrome bc1 complex then forms a dimer. The cofactor is heme b.

The protein resides in the mitochondrion inner membrane. Functionally, component of the ubiquinol-cytochrome c reductase complex (complex III or cytochrome b-c1 complex) that is part of the mitochondrial respiratory chain. The b-c1 complex mediates electron transfer from ubiquinol to cytochrome c. Contributes to the generation of a proton gradient across the mitochondrial membrane that is then used for ATP synthesis. This Pterodroma hypoleuca (Bonin petrel) protein is Cytochrome b (MT-CYB).